A 253-amino-acid chain; its full sequence is Phosphate import ATP-binding protein PstB (253 aa).

An ABC transporter domain is found at I7–I248. G39 to S46 is an ATP binding site.

Belongs to the ABC transporter superfamily. Phosphate importer (TC 3.A.1.7) family. The complex is composed of two ATP-binding proteins (PstB), two transmembrane proteins (PstC and PstA) and a solute-binding protein (PstS).

It localises to the cell membrane. It catalyses the reaction phosphate(out) + ATP + H2O = ADP + 2 phosphate(in) + H(+). Functionally, part of the ABC transporter complex PstSACB involved in phosphate import. Responsible for energy coupling to the transport system. This chain is Phosphate import ATP-binding protein PstB, found in Carboxydothermus hydrogenoformans (strain ATCC BAA-161 / DSM 6008 / Z-2901).